Here is a 1840-residue protein sequence, read N- to C-terminus: Neurexin 1 (1840 aa).

Residues 1 to 50 (MKAPHSATYQDNYADAAMTARTRPSMDMDQQRNRNQAELRLLPAQRTSTS) are disordered. Topologically, residues 1–1696 (MKAPHSATYQ…NSIEEERTAM (1696 aa)) are extracellular. The span at 24–37 (PSMDMDQQRNRNQA) shows a compositional bias: basic and acidic residues. The 186-residue stretch at 104 to 289 (GFQLDGSQNS…RDIKCGDVPC (186 aa)) folds into the Laminin G-like 1 domain. Positions 309-347 (TTDACERNDPCQHGGICISTDSGPICECRNLEYDGQYCE) constitute an EGF-like 1 domain. 8 disulfide bridges follow: Cys313/Cys325, Cys319/Cys334, Cys336/Cys346, Cys511/Cys547, Cys710/Cys739, Cys746/Cys757, Cys751/Cys766, and Cys768/Cys778. 2 Laminin G-like domains span residues 352–547 (PSEA…EYQC) and 554–739 (DPVT…KPSC). The EGF-like 2 domain occupies 742 to 779 (QANVCNGNPCLNGGTCLEGWNRPICDCSATLYGGPTCG). Laminin G-like domains lie at 784 to 964 (TLAF…LPSA) and 982 to 1158 (HAAT…VSGC). 4 disulfide bridges follow: Cys1130/Cys1158, Cys1164/Cys1175, Cys1169/Cys1184, and Cys1186/Cys1196. The EGF-like 3 domain maps to 1160–1197 (GPTKCSQNACANRGNCVQQWNAYACECDMTSYTGPTCY). The Laminin G-like 6 domain occupies 1201–1416 (IAYEFGNNKG…LIFSGAGSGC (216 aa)). The segment at 1411-1651 (GAGSGCRGDD…DEHHPLPPLP (241 aa)) is disordered. The segment covering 1447-1472 (QTTTSQQGNSLSTGGSSSGGVITNGT) has biased composition (low complexity). A compositionally biased stretch (polar residues) spans 1491–1527 (TTEQFTSTSTARGSESNNEMVTITTTGRSDVTTEQHQ). Residues 1528–1600 (GSSSSSSSGS…TTTTTTTTQA (73 aa)) show a composition bias toward low complexity. Residues 1632 to 1646 (RNDHDRMQLPDEHHP) are compositionally biased toward basic and acidic residues. The helical transmembrane segment at 1697–1717 (IIGIVAGILIAVVLVILLVLW) threads the bilayer. Topologically, residues 1718–1840 (LKSNGDRGYK…DSKDVKEWYV (123 aa)) are cytoplasmic. Residues 1737–1840 (GSHNPNAALL…DSKDVKEWYV (104 aa)) are disordered. Residues 1747–1757 (GNTSTNGSYHQ) are compositionally biased toward polar residues. Low complexity predominate over residues 1774–1787 (QQQHHAQQQMHNGH). Over residues 1788–1813 (NGNGNGGGGGGGGMMSSGSGSLGYGS) the composition is skewed to gly residues. Residues Asp1831 and Asp1834 each coordinate Zn(2+). The span at 1831–1840 (DSKDVKEWYV) shows a compositional bias: basic and acidic residues. Positions 1837–1840 (EWYV) match the PDZ domain binding motif.

Belongs to the neurexin family. Interacts (via C-terminal PDZ binding motif) with CASK (via PDZ domain). Interacts (via cytoplasmic domain) with apolpp/ApoLI; the interaction supports apolpp/ApoLI protein stability. Interact (via cytoplasmic domain) with Spn/Spinophilin. Interacts with RhoGAP100F/Syd-1 (via PDZ domain); RhoGAP100F/Syd-1 may recruit Nrx-1 to the presynaptic active zone. Expressed in brain, with expression in medulla, lamina, lobula, lobula plate, mushroom body and antennal lobe, and in retina (at protein level). Expressed in rabdomere of photoreceptor cells (at protein level).

The protein resides in the synaptic cell membrane. It is found in the presynaptic cell membrane. Its subcellular location is the postsynaptic cell membrane. In terms of biological role, neuronal cell adhesion protein involved in synapse formation, development of synaptic active zones, synaptic regulation and visual function. Plays a role in cell adhesion between the pre- and the postsynaptic cell. Required for proper proliferation of synaptic boutons during larval development, a process necessary for coordinated matching of pre-and postsynaptic compartments. Promotes presynaptic active zone formation and neurotransmitter release. Spn/Spinophilin fine-tunes nrx-1/nlg1 signaling at the pre-synapse to control active zone number and functionality and thereby optimizing action potential-induced exocytosis. Required for synapse formation in central nervous system. By regulating synapse formation, may play a role in larval associative learning. Together with RhoGAP100F/syd-1, controls synapse formation at the neuromuscular junction. Essential for synaptic vesicle cycling, which plays critical roles in neurotransmission at neuromuscular junctions (NMJ). Regulated and restricts formation of glutamate receptor clusters. Mediates retinoid transport and subsequent rhodopsin maturation and may regulate lipoprotein function; thereby playing a role in vision. Regulates sleep, circadian rhythm and synaptic plasticity. Together with CASK, required for locomotion. The polypeptide is Neurexin 1 (Drosophila melanogaster (Fruit fly)).